Consider the following 385-residue polypeptide: Probable protein phosphatase 2C 79 (385 aa).

An N-terminal signal peptide occupies residues M1 to S18. One can recognise a PPM-type phosphatase domain in the interval D47–L356. S76 bears the Phosphoserine mark. Mn(2+)-binding residues include D87, G88, D288, and D347.

This sequence belongs to the PP2C family. It depends on Mg(2+) as a cofactor. Requires Mn(2+) as cofactor.

The enzyme catalyses O-phospho-L-seryl-[protein] + H2O = L-seryl-[protein] + phosphate. The catalysed reaction is O-phospho-L-threonyl-[protein] + H2O = L-threonyl-[protein] + phosphate. In terms of biological role, may dephosphorylate and repress plasma membrane H(+)-ATPases (PM H(+)-ATPases, e.g. AHA1 and AHA2), thus influencing negatively plant growth and fitness. The polypeptide is Probable protein phosphatase 2C 79 (Arabidopsis thaliana (Mouse-ear cress)).